The following is a 370-amino-acid chain: tRNA (guanine(26)-N(2))-dimethyltransferase (370 aa).

The Trm1 methyltransferase domain occupies 4–368 (TWVTEGRTTI…APLEEIRDCI (365 aa)). The S-adenosyl-L-methionine site is built by arginine 41, arginine 66, aspartate 82, aspartate 108, and alanine 109. Zn(2+) contacts are provided by cysteine 237, cysteine 240, cysteine 256, and cysteine 259.

This sequence belongs to the class I-like SAM-binding methyltransferase superfamily. Trm1 family.

It carries out the reaction guanosine(26) in tRNA + 2 S-adenosyl-L-methionine = N(2)-dimethylguanosine(26) in tRNA + 2 S-adenosyl-L-homocysteine + 2 H(+). In terms of biological role, dimethylates a single guanine residue at position 26 of a number of tRNAs using S-adenosyl-L-methionine as donor of the methyl groups. In Methanospirillum hungatei JF-1 (strain ATCC 27890 / DSM 864 / NBRC 100397 / JF-1), this protein is tRNA (guanine(26)-N(2))-dimethyltransferase.